The sequence spans 771 residues: Putative 8-amino-7-oxononanoate synthase 2 (771 aa).

The tract at residues 1–418 (MPTGLGYDFL…TVKAAELGEI (418 aa)) is unknown. Arginine 407 contributes to the substrate binding site. The segment at 419-771 (VLLGTNSYLG…EDLTPQGAAL (353 aa)) is KAPA synthase. 485 to 486 (GY) contacts pyridoxal 5'-phosphate. Histidine 510 is a binding site for substrate. Pyridoxal 5'-phosphate-binding positions include serine 556 and 581 to 584 (DESH). N6-(pyridoxal phosphate)lysine is present on lysine 615.

In the C-terminal section; belongs to the class-II pyridoxal-phosphate-dependent aminotransferase family. BioF subfamily. The cofactor is pyridoxal 5'-phosphate.

The enzyme catalyses 6-carboxyhexanoyl-[ACP] + L-alanine + H(+) = (8S)-8-amino-7-oxononanoate + holo-[ACP] + CO2. Catalyzes the decarboxylative condensation of pimeloyl-[acyl-carrier protein] and L-alanine to produce 8-amino-7-oxononanoate (AON), [acyl-carrier protein], and carbon dioxide. In Mycobacterium tuberculosis (strain CDC 1551 / Oshkosh), this protein is Putative 8-amino-7-oxononanoate synthase 2 (bioF2).